A 638-amino-acid polypeptide reads, in one-letter code: NBPF family member NBPF6 (638 aa).

Coiled-coil stretches lie at residues 10–43 and 69–115; these read SERA…EKFL and DSVL…KLRE. The interval 157–285 is disordered; the sequence is HLVHKLSPEN…VPPRHHDKSN (129 aa). A compositionally biased stretch (acidic residues) spans 165–179; the sequence is ENDEDEDEDEDDKDE. Residues 174–261 form the Olduvai 1 domain; the sequence is EDDKDEEVEK…EEEEALNIPP (88 aa). Basic and acidic residues predominate over residues 192-202; the sequence is EVQKTEEKEVP. Residues 214–226 are compositionally biased toward low complexity; the sequence is SNSHNPSNSNQPH. Basic and acidic residues-rich tracts occupy residues 232–251 and 264–273; these read TFKE…HPHD and QNDHEEEEGK. Olduvai domains are found at residues 326-399 and 400-503; these read EKQS…ALVD and KIKK…SQAQ. Positions 563 to 584 are disordered; sequence MKNPPQLEDDALEGSASNTQGR.

The protein belongs to the NBPF family.

Its subcellular location is the cytoplasm. The polypeptide is NBPF family member NBPF6 (Homo sapiens (Human)).